Here is a 161-residue protein sequence, read N- to C-terminus: uncharacterized protein (161 aa).

This sequence belongs to the sapovirus VP3 family.

This is an uncharacterized protein from Sapporo virus (strain Human/United Kingdom/Manchester/1993) (Hu/SV/Man/1993/UK).